Consider the following 631-residue polypeptide: Extracellular metalloproteinase mep (631 aa).

An N-terminal signal peptide occupies residues 1–19; sequence MHGLRLVCSIGTLPLVILA. A propeptide spanning residues 20-241 is cleaved from the precursor; that stretch reads YPAASLHTTS…VHGVVDYVAD (222 aa). Residues Asn282, Asn332, and Asn364 are each glycosylated (N-linked (GlcNAc...) asparagine). Residue His425 participates in Zn(2+) binding. The active site involves Glu426. His429 is a Zn(2+) binding site. N-linked (GlcNAc...) asparagine glycans are attached at residues Asn470 and Asn505.

It belongs to the peptidase M36 family. Zn(2+) serves as cofactor.

The protein resides in the secreted. Secreted metalloproteinase that allows assimilation of proteinaceous substrates. This chain is Extracellular metalloproteinase mep (mep), found in Aspergillus niger (strain ATCC MYA-4892 / CBS 513.88 / FGSC A1513).